Here is a 288-residue protein sequence, read N- to C-terminus: Ribosomal RNA small subunit methyltransferase A (288 aa).

6 residues coordinate S-adenosyl-L-methionine: asparagine 18, leucine 20, glycine 45, glutamate 66, aspartate 91, and asparagine 118.

The protein belongs to the class I-like SAM-binding methyltransferase superfamily. rRNA adenine N(6)-methyltransferase family. RsmA subfamily.

It is found in the cytoplasm. The enzyme catalyses adenosine(1518)/adenosine(1519) in 16S rRNA + 4 S-adenosyl-L-methionine = N(6)-dimethyladenosine(1518)/N(6)-dimethyladenosine(1519) in 16S rRNA + 4 S-adenosyl-L-homocysteine + 4 H(+). Specifically dimethylates two adjacent adenosines (A1518 and A1519) in the loop of a conserved hairpin near the 3'-end of 16S rRNA in the 30S particle. May play a critical role in biogenesis of 30S subunits. The sequence is that of Ribosomal RNA small subunit methyltransferase A from Pasteurella multocida (strain Pm70).